Consider the following 97-residue polypeptide: Alpha-latrotoxin associated low molecular weight protein 2 (97 aa).

The first 19 residues, 1-19 (MFKLICIVFIATILSITSA), serve as a signal peptide directing secretion. 3 disulfide bridges follow: C36/C72, C52/C68, and C55/C81.

The protein belongs to the arthropod CHH/MIH/GIH/VIH hormone family. As to expression, expressed by the venom gland.

The protein resides in the secreted. May increase the toxicity of alpha-latrotoxin and/or other venom components. Is non-toxic to mice and to the cockroach Periplaneta americana. In Steatoda grossa (False black widow), this protein is Alpha-latrotoxin associated low molecular weight protein 2.